The following is a 247-amino-acid chain: Protein NipSnap homolog 3B (247 aa).

N6-succinyllysine occurs at positions 45, 48, 57, and 166.

It belongs to the NipSnap family.

The protein localises to the cytoplasm. It is found in the cytosol. The chain is Protein NipSnap homolog 3B (Nipsnap3b) from Mus musculus (Mouse).